Consider the following 375-residue polypeptide: Glutamate 5-kinase (375 aa).

Lysine 17 provides a ligand contact to ATP. Positions 57, 144, and 156 each coordinate substrate. 176–177 (TD) contributes to the ATP binding site. In terms of domain architecture, PUA spans 283–361 (KGELILDTGA…DEIEGILGYV (79 aa)).

It belongs to the glutamate 5-kinase family.

It localises to the cytoplasm. The catalysed reaction is L-glutamate + ATP = L-glutamyl 5-phosphate + ADP. Its pathway is amino-acid biosynthesis; L-proline biosynthesis; L-glutamate 5-semialdehyde from L-glutamate: step 1/2. Its function is as follows. Catalyzes the transfer of a phosphate group to glutamate to form L-glutamate 5-phosphate. This Thioalkalivibrio sulfidiphilus (strain HL-EbGR7) protein is Glutamate 5-kinase.